We begin with the raw amino-acid sequence, 101 residues long: Small ribosomal subunit protein bS18c (101 aa).

The segment covering 1–19 has biased composition (basic residues); sequence MNKSKRPFTKSKRSFRRRL. Positions 1 to 23 are disordered; sequence MNKSKRPFTKSKRSFRRRLPPIQ.

It belongs to the bacterial ribosomal protein bS18 family. Part of the 30S ribosomal subunit.

It is found in the plastid. Its subcellular location is the chloroplast. In Lobularia maritima (Sweet alyssum), this protein is Small ribosomal subunit protein bS18c.